The chain runs to 267 residues: 4-hydroxy-tetrahydrodipicolinate reductase (267 aa).

Residues 9–14 and D35 each bind NAD(+); that span reads GAGGRM. Residue R36 coordinates NADP(+). NAD(+)-binding positions include 99 to 101 and 123 to 126; these read GTT and AANY. The active-site Proton donor/acceptor is the H156. H157 contacts (S)-2,3,4,5-tetrahydrodipicolinate. K160 (proton donor) is an active-site residue. (S)-2,3,4,5-tetrahydrodipicolinate is bound at residue 166–167; it reads GT.

Belongs to the DapB family.

The protein resides in the cytoplasm. The enzyme catalyses (S)-2,3,4,5-tetrahydrodipicolinate + NAD(+) + H2O = (2S,4S)-4-hydroxy-2,3,4,5-tetrahydrodipicolinate + NADH + H(+). It catalyses the reaction (S)-2,3,4,5-tetrahydrodipicolinate + NADP(+) + H2O = (2S,4S)-4-hydroxy-2,3,4,5-tetrahydrodipicolinate + NADPH + H(+). It functions in the pathway amino-acid biosynthesis; L-lysine biosynthesis via DAP pathway; (S)-tetrahydrodipicolinate from L-aspartate: step 4/4. Functionally, catalyzes the conversion of 4-hydroxy-tetrahydrodipicolinate (HTPA) to tetrahydrodipicolinate. This chain is 4-hydroxy-tetrahydrodipicolinate reductase, found in Halorhodospira halophila (strain DSM 244 / SL1) (Ectothiorhodospira halophila (strain DSM 244 / SL1)).